We begin with the raw amino-acid sequence, 105 residues long: Transcription factor S (105 aa).

Positions 5, 8, 21, 24, 66, 69, 94, and 97 each coordinate Zn(2+). The segment at 5-24 adopts a C4-type zinc-finger fold; it reads CPKCNNIMLPKNGRLKCTVC. A TFIIS-type zinc finger spans residues 62–102; that stretch reads TRIECPSCGNMEASWWLQQTRCADEPETRFYKCKKCGHTWR.

This sequence belongs to the archaeal RpoM/eukaryotic RPA12/RPB9/RPC11 RNA polymerase family.

Induces RNA cleavage activity in the RNA polymerase. In its presence, the cleavage activity of the RNA polymerase truncates the RNA back to position +15 in a stepwise manner by releasing mainly dinucleotides from the 3'-end of the nascent RNA. The truncated RNAs are able to continue elongation. Involved in transcriptional proofreading and fidelity. Misincorporation of nucleotides during elongation of transcription leads to arrested elongation complexes which are rescued by TFS-promoted removal of a dinucleotide from the 3'-end. TFS is able to induce a cleavage resynthesis cycle in stalled elongation complexes (resulting from the next missing nucleotide or a reduced incorporation rate of a wrong nucleotide) preventing misincorporation and enabling proofreading in a post-incorporation manner. Pausing of elongation complexes is the main determinant of TFS-induced RNA cleavage. The sequence is that of Transcription factor S from Methanothermococcus thermolithotrophicus (Methanococcus thermolithotrophicus).